The chain runs to 166 residues: Small ribosomal subunit protein uS5 (166 aa).

Positions 11–74 constitute an S5 DRBM domain; it reads LQEKLIAVNR…EKARRNMMNV (64 aa).

Belongs to the universal ribosomal protein uS5 family. As to quaternary structure, part of the 30S ribosomal subunit. Contacts proteins S4 and S8.

With S4 and S12 plays an important role in translational accuracy. Its function is as follows. Located at the back of the 30S subunit body where it stabilizes the conformation of the head with respect to the body. The sequence is that of Small ribosomal subunit protein uS5 from Sodalis glossinidius (strain morsitans).